We begin with the raw amino-acid sequence, 99 residues long: NADH-quinone oxidoreductase subunit K (99 aa).

3 consecutive transmembrane segments (helical) span residues P3–V23, I28–F48, and V59–I79.

It belongs to the complex I subunit 4L family. In terms of assembly, NDH-1 is composed of 14 different subunits. Subunits NuoA, H, J, K, L, M, N constitute the membrane sector of the complex.

The protein resides in the cell membrane. It carries out the reaction a quinone + NADH + 5 H(+)(in) = a quinol + NAD(+) + 4 H(+)(out). NDH-1 shuttles electrons from NADH, via FMN and iron-sulfur (Fe-S) centers, to quinones in the respiratory chain. The immediate electron acceptor for the enzyme in this species is believed to be a menaquinone. Couples the redox reaction to proton translocation (for every two electrons transferred, four hydrogen ions are translocated across the cytoplasmic membrane), and thus conserves the redox energy in a proton gradient. In Frankia alni (strain DSM 45986 / CECT 9034 / ACN14a), this protein is NADH-quinone oxidoreductase subunit K.